A 122-amino-acid polypeptide reads, in one-letter code: Toxin CSTX-1 (122 aa).

Positions 1-20 (MKVLIISAVLFITIFSNISA) are cleaved as a signal peptide. Positions 21–47 (EIEDDFLEDESFEAEDIIPFFENEQAR) are excised as a propeptide. Disulfide bonds link Cys-49–Cys-64, Cys-56–Cys-73, Cys-63–Cys-91, and Cys-75–Cys-89. The predicted alpha-helix stretch occupies residues 99-112 (AIETGLNIFRGLFK). Arginine amide; in CSTX-2a is present on Arg-108. Lys-121 carries the post-translational modification Lysine amide; in omega-ctenitoxin-Cs1a.

The protein belongs to the neurotoxin 19 (CSTX) family. 04 (U1-Lctx) subfamily. Monomer. Interacts with CSTX-13 (AC P83919) (Kd=430 nM), but does not interact with CSTX-9 (AC P58604). Expressed by the venom gland.

It is found in the secreted. The protein resides in the target cell membrane. In terms of biological role, spider venom toxin that shows calcium channel blocking activity and exhibits cytolytic activity by affecting the outer leaflet curvature and/or pore formation across the membrane. It blocks L-type calcium channels (Cav1/CACNA1) in mammalian neurons at nanomolar concentrations. Furthermore, it produces a slow voltage-independent block of mid/low and high voltage-activated calcium channels in cockroach neurons. Potassium ions, histamine, M-ctenitoxin-Cs1a (AC P83619), CSTX-9 (AC P58604), and CSTX-13 (AC P83919) synergistically increase the insecticidal activity of this toxin. In vivo, it causes paralysis in blow flies and provokes death in drosophila. Functionally, blocks voltage-activated calcium channels (Cav). Does not induce cell membrane permeability increase when tested on Xenopus oocytes. No alpha-helical structures are detectable. Is 7-fold less neurotoxic than omega-ctenitoxin-Cs1a on drosophila flies. Its function is as follows. Blocks voltage-activated calcium channels (Cav). Is 190-fold less neurotoxic than omega-ctenitoxin-Cs1a on drosophila flies. This is Toxin CSTX-1 from Cupiennius salei (American wandering spider).